We begin with the raw amino-acid sequence, 500 residues long: Probable malate:quinone oxidoreductase (500 aa).

The protein belongs to the MQO family. It depends on FAD as a cofactor.

It catalyses the reaction (S)-malate + a quinone = a quinol + oxaloacetate. Its pathway is carbohydrate metabolism; tricarboxylic acid cycle; oxaloacetate from (S)-malate (quinone route): step 1/1. The polypeptide is Probable malate:quinone oxidoreductase (Bacillus cereus (strain ZK / E33L)).